A 119-amino-acid chain; its full sequence is Autophagy-related protein 8B (119 aa).

Residue Gly117 is the site of Phosphatidylethanolamine amidated glycine attachment. A propeptide spans 118–119 (removed in mature form); the sequence is LL.

This sequence belongs to the ATG8 family. As to quaternary structure, interacts with ATG4. In terms of processing, the C-terminal 2 residues are removed by ATG4 to expose Gly-117 at the C-terminus. The C-terminal Gly is then amidated with phosphatidylethanolamine by an activating system similar to that for ubiquitin.

It localises to the cytoplasmic vesicle. Its subcellular location is the autophagosome membrane. The protein localises to the vacuole membrane. The protein resides in the cytoplasm. It is found in the cytoskeleton. Functionally, ubiquitin-like modifier involved in autophagosomes formation. May mediate the delivery of the autophagosomes to the vacuole via the microtubule cytoskeleton. This Oryza sativa subsp. indica (Rice) protein is Autophagy-related protein 8B (ATG8B).